A 342-amino-acid polypeptide reads, in one-letter code: MRVLLFLLLSLFMLPAFSADNLLRWHDAQHFTVQASMPLKAKRVWKLCALYPSLKDSYWLSLNYGMQEAARRYGVDLKVLEAGGYSQLATQQAQIDQCKQWGAEAILLGSSTTSFPDLQKQVANLPVIELVNAIDAPQVKSRVGVPWFQMGYQPGRYLVQWAHGKPLNVLLMPGPDNAGGSKEMVEGFRAAIAGSPVRIVDIALGDNDIEIQRNLLQEMLERHPEIDVVAGTAIAAEAAMGEGRNLKTPLTVVSFYLSHQVYRGLKRGRVIMAASDQMVWQGELAVEQAIRQLQGQSVSDNVSPPILVLTPKNADREHIRRSLSPGGFRPVYFYQHTSAAKK.

The signal sequence occupies residues 1–18; sequence MRVLLFLLLSLFMLPAFS.

The protein belongs to the bacterial solute-binding protein 2 family.

It is found in the periplasm. Its function is as follows. Upon binding a putative inducer it probably interacts with TorS and allows it to play a role in the induction of the torCAD operon for trimethylamine N-oxide reductase. This is Periplasmic protein TorT (torT) from Escherichia coli O157:H7.